Here is a 222-residue protein sequence, read N- to C-terminus: Small ribosomal subunit protein uS7m (222 aa).

The transit peptide at 1-14 (MTTKLARFAQKRWI) directs the protein to the mitochondrion.

It belongs to the universal ribosomal protein uS7 family. In terms of assembly, component of the mitochondrial ribosome small subunit (28S) which comprises a 12S rRNA and about 30 distinct proteins.

It is found in the mitochondrion. The chain is Small ribosomal subunit protein uS7m (mrps-7) from Caenorhabditis elegans.